Consider the following 874-residue polypeptide: Alanine--tRNA ligase (874 aa).

The Zn(2+) site is built by His-562, His-566, Cys-663, and His-667.

This sequence belongs to the class-II aminoacyl-tRNA synthetase family. Requires Zn(2+) as cofactor.

The protein localises to the cytoplasm. It carries out the reaction tRNA(Ala) + L-alanine + ATP = L-alanyl-tRNA(Ala) + AMP + diphosphate. Catalyzes the attachment of alanine to tRNA(Ala) in a two-step reaction: alanine is first activated by ATP to form Ala-AMP and then transferred to the acceptor end of tRNA(Ala). Also edits incorrectly charged Ser-tRNA(Ala) and Gly-tRNA(Ala) via its editing domain. This Bordetella parapertussis (strain 12822 / ATCC BAA-587 / NCTC 13253) protein is Alanine--tRNA ligase.